A 163-amino-acid chain; its full sequence is Probable chemoreceptor glutamine deamidase CheD (163 aa).

Belongs to the CheD family.

It carries out the reaction L-glutaminyl-[protein] + H2O = L-glutamyl-[protein] + NH4(+). In terms of biological role, probably deamidates glutamine residues to glutamate on methyl-accepting chemotaxis receptors (MCPs), playing an important role in chemotaxis. This is Probable chemoreceptor glutamine deamidase CheD from Borrelia turicatae (strain 91E135).